A 299-amino-acid chain; its full sequence is Putative transposase InsZ (299 aa).

The segment covering 276-291 (PSRPRSVKISKTRYPV) has biased composition (basic residues). The disordered stretch occupies residues 276–299 (PSRPRSVKISKTRYPVKHSAAPLK).

This Escherichia coli (strain K12) protein is Putative transposase InsZ (insZ).